We begin with the raw amino-acid sequence, 548 residues long: Probable manganese-dependent inorganic pyrophosphatase (548 aa).

The PPase part 1 stretch occupies residues 1 to 74; sequence MKALERVYVI…HIETLEPTVE (74 aa). Residues His12, Asp16, and Asp18 each contribute to the Mn(2+) site. CBS domains follow at residues 77-132 and 254-311; these read ELKN…RLKI and MSKK…VILV. Residues 306–548 form a PPase part 2 region; that stretch reads KKVILVDHNE…KIGEVLRRER (243 aa). Mn(2+) contacts are provided by Asp312, His334, and Asp386.

It belongs to the PPase class C family. Mn(2+) serves as cofactor.

The protein localises to the cytoplasm. It carries out the reaction diphosphate + H2O = 2 phosphate + H(+). This Thermotoga maritima (strain ATCC 43589 / DSM 3109 / JCM 10099 / NBRC 100826 / MSB8) protein is Probable manganese-dependent inorganic pyrophosphatase (ppaC).